A 282-amino-acid chain; its full sequence is MTNFSSSPPIAFGDLQGCHAAYRQLFDTLAPAADTPLWFAGDLVNRGPASLATLREIVALGERAIAVLGNHDLHLLAVAAGIRTLKPGDTIGEILDAPDADDLIEWVRHRPFAHFERGMLMVHAGLLPQWDAALALELADELQRALRAPNWRDTLRSLYGNDPNCWSPDLKHADRLRVAFNAFTRIRFCTPEGAMEFRANGGPAAAPAGYLPWFDAPGRKTADVTVVFGHWAALGLMLRENLVALDSGCVWGNRLSAVRLTDDPAARVVTQVACERCGAADE.

This sequence belongs to the Ap4A hydrolase family.

It catalyses the reaction P(1),P(4)-bis(5'-adenosyl) tetraphosphate + H2O = 2 ADP + 2 H(+). Functionally, hydrolyzes diadenosine 5',5'''-P1,P4-tetraphosphate to yield ADP. The polypeptide is Bis(5'-nucleosyl)-tetraphosphatase, symmetrical (Burkholderia pseudomallei (strain 668)).